The chain runs to 114 residues: NLP effector protein 1 (114 aa).

It belongs to the Necrosis inducing protein (NPP1) family.

The protein resides in the secreted. The protein localises to the host cytoplasm. In terms of biological role, probable secreted effector that may act as a pathogen-associated molecular pattern (PAMP) recognized by the plant immune system. Seems not to induce necrosis, neither in several susceptible or resistant Vitis species nor in the dicot model plant Nicotiana benthamiana. The protein is NLP effector protein 1 of Plasmopara viticola (Downy mildew of grapevine).